The primary structure comprises 433 residues: MTHFSPREIVSELDRFIVGQTDAKRAVSIALRNRWRRQQLTGSMREEVLPKNILMIGPTGVGKTEIARRLAKLANAPFIKVEATKFTEVGYVGRDVEQIVRDLVEVAIGQTRERKRKDVQARAQLAAEERVLDALVGANASAATRDSFRRKLRAGDLNDKEIEIETQSSGGAPMFEIPGMPGAQVGAISIGDIFGKMGGRTKTRRLTVVDSYEILVNEESDKLLDSDQLTQEAIAAVENNGIVFLDEIDKICVRDGRSGGDVSREGVQRDLLPLIEGTTVSTKHGAVKTDHILFIASGAFHIAKPSDLLPELQGRLPIRVELDALTRNDMRRILTEPEASLIKQYVALMQTEGVTLDITDDAIDALADIAVAVNSTVENIGARRLQTVMERVLDDISFSAPDRNGETVRIDAGYVQKHIGDLAKNADLSRFIL.

ATP-binding positions include valine 18, 60–65, aspartate 246, glutamate 311, and arginine 383; that span reads GVGKTE.

This sequence belongs to the ClpX chaperone family. HslU subfamily. In terms of assembly, a double ring-shaped homohexamer of HslV is capped on each side by a ring-shaped HslU homohexamer. The assembly of the HslU/HslV complex is dependent on binding of ATP.

The protein resides in the cytoplasm. Functionally, ATPase subunit of a proteasome-like degradation complex; this subunit has chaperone activity. The binding of ATP and its subsequent hydrolysis by HslU are essential for unfolding of protein substrates subsequently hydrolyzed by HslV. HslU recognizes the N-terminal part of its protein substrates and unfolds these before they are guided to HslV for hydrolysis. The chain is ATP-dependent protease ATPase subunit HslU from Nitrobacter hamburgensis (strain DSM 10229 / NCIMB 13809 / X14).